The following is a 328-amino-acid chain: Tetraacyldisaccharide 4'-kinase (328 aa).

Position 55-62 (55-62 (TAGGNGKT)) interacts with ATP.

Belongs to the LpxK family.

The catalysed reaction is a lipid A disaccharide + ATP = a lipid IVA + ADP + H(+). It participates in glycolipid biosynthesis; lipid IV(A) biosynthesis; lipid IV(A) from (3R)-3-hydroxytetradecanoyl-[acyl-carrier-protein] and UDP-N-acetyl-alpha-D-glucosamine: step 6/6. Its function is as follows. Transfers the gamma-phosphate of ATP to the 4'-position of a tetraacyldisaccharide 1-phosphate intermediate (termed DS-1-P) to form tetraacyldisaccharide 1,4'-bis-phosphate (lipid IVA). The protein is Tetraacyldisaccharide 4'-kinase of Escherichia coli O17:K52:H18 (strain UMN026 / ExPEC).